Here is a 348-residue protein sequence, read N- to C-terminus: Fe-S cluster assembly protein DRE2 (348 aa).

Positions 1–162 (MSQYKTGLLL…KKASSSTSNL (162 aa)) are N-terminal SAM-like domain. Positions 137 to 170 (KTNNTKLQSGSKLPTFKKASSSTSNLPSFKKADH) are disordered. The span at 144–163 (QSGSKLPTFKKASSSTSNLP) shows a compositional bias: polar residues. Positions 163–242 (PSFKKADHSR…EEELIDEDGS (80 aa)) are linker. Ser-206 bears the Phosphoserine mark. Cys-252, Cys-263, Cys-266, and Cys-268 together coordinate [2Fe-2S] cluster. The tract at residues 252 to 268 (CGKSKTKKKKACKDCTC) is fe-S binding site A. Positions 311, 314, 322, and 325 each coordinate [4Fe-4S] cluster. 2 consecutive short sequence motifs (cx2C motif) follow at residues 311–314 (CGSC) and 322–325 (CSGC). The interval 311 to 325 (CGSCSLGDAFRCSGC) is fe-S binding site B.

Belongs to the anamorsin family. Monomer. Interacts with TAH18. Interacts with MIA40. [2Fe-2S] cluster serves as cofactor. The cofactor is [4Fe-4S] cluster.

The protein localises to the cytoplasm. It localises to the mitochondrion intermembrane space. Component of the cytosolic iron-sulfur (Fe-S) protein assembly (CIA) machinery required for the maturation of extramitochondrial Fe-S proteins. Part of an electron transfer chain functioning in an early step of cytosolic Fe-S biogenesis, facilitating the de novo assembly of a [4Fe-4S] cluster on the scaffold complex CFD1-NBP35. Electrons are transferred to DRE2 from NADPH via the FAD- and FMN-containing protein TAH18. TAH18-DRE2 are also required for the assembly of the diferric tyrosyl radical cofactor of ribonucleotide reductase (RNR), probably by providing electrons for reduction during radical cofactor maturation in the catalytic small subunit RNR2. The protein is Fe-S cluster assembly protein DRE2 of Saccharomyces cerevisiae (strain Lalvin EC1118 / Prise de mousse) (Baker's yeast).